We begin with the raw amino-acid sequence, 445 residues long: Argininosuccinate synthase (445 aa).

Residues 17–25 and Ala43 each bind ATP; that span reads AFSGGLDTS. L-citrulline is bound at residue Tyr99. 2 residues coordinate ATP: Gly129 and Thr131. L-aspartate-binding residues include Thr131, Asn135, and Asp136. L-citrulline is bound at residue Asn135. An ATP-binding site is contributed by Asp136. The L-citrulline site is built by Arg139 and Ser192. Residue Asp194 participates in ATP binding. L-citrulline-binding residues include Thr201, Glu203, and Glu280.

Belongs to the argininosuccinate synthase family. Type 2 subfamily. In terms of assembly, homotetramer.

Its subcellular location is the cytoplasm. The catalysed reaction is L-citrulline + L-aspartate + ATP = 2-(N(omega)-L-arginino)succinate + AMP + diphosphate + H(+). It functions in the pathway amino-acid biosynthesis; L-arginine biosynthesis; L-arginine from L-ornithine and carbamoyl phosphate: step 2/3. The sequence is that of Argininosuccinate synthase from Bordetella pertussis (strain Tohama I / ATCC BAA-589 / NCTC 13251).